The sequence spans 614 residues: Dihydroxy-acid dehydratase (614 aa).

Aspartate 81 provides a ligand contact to Mg(2+). Residue cysteine 122 coordinates [2Fe-2S] cluster. Mg(2+) is bound by residues aspartate 123 and lysine 124. Residue lysine 124 is modified to N6-carboxylysine. Cysteine 195 contributes to the [2Fe-2S] cluster binding site. Mg(2+) is bound at residue glutamate 491. Catalysis depends on serine 517, which acts as the Proton acceptor.

The protein belongs to the IlvD/Edd family. In terms of assembly, homodimer. It depends on [2Fe-2S] cluster as a cofactor. Requires Mg(2+) as cofactor.

The catalysed reaction is (2R)-2,3-dihydroxy-3-methylbutanoate = 3-methyl-2-oxobutanoate + H2O. It carries out the reaction (2R,3R)-2,3-dihydroxy-3-methylpentanoate = (S)-3-methyl-2-oxopentanoate + H2O. It participates in amino-acid biosynthesis; L-isoleucine biosynthesis; L-isoleucine from 2-oxobutanoate: step 3/4. Its pathway is amino-acid biosynthesis; L-valine biosynthesis; L-valine from pyruvate: step 3/4. Its function is as follows. Functions in the biosynthesis of branched-chain amino acids. Catalyzes the dehydration of (2R,3R)-2,3-dihydroxy-3-methylpentanoate (2,3-dihydroxy-3-methylvalerate) into 2-oxo-3-methylpentanoate (2-oxo-3-methylvalerate) and of (2R)-2,3-dihydroxy-3-methylbutanoate (2,3-dihydroxyisovalerate) into 2-oxo-3-methylbutanoate (2-oxoisovalerate), the penultimate precursor to L-isoleucine and L-valine, respectively. This is Dihydroxy-acid dehydratase from Nitrobacter winogradskyi (strain ATCC 25391 / DSM 10237 / CIP 104748 / NCIMB 11846 / Nb-255).